The primary structure comprises 375 residues: DnaJ homolog subfamily B member 12 (375 aa).

Residue Met-1 is modified to N-acetylmethionine. The Cytoplasmic segment spans residues 1–243 (MESNKDEAER…DRRDNQGDGG (243 aa)). The tract at residues 45–92 (ALIESLNQKPQTAGDQPPPTDTTHATHRKAGGTDAPSANGEAGGESTK) is disordered. Polar residues predominate over residues 49 to 58 (SLNQKPQTAG). Residues 112–176 (YEILGVSRGA…RKQYDQFGDD (65 aa)) form the J domain. A Pros-methylhistidine modification is found at His-185. Residues 244 to 264 (LGVFVQLMPILILILVSALSQ) traverse the membrane as a helical segment. At 265–375 (LMVSSPPYSL…LSEVQASLHG (111 aa)) the chain is on the lumenal side.

It belongs to the DnaJ family. DNAJB12/DNAJB14 subfamily. Homodimer and homotetramer. Interacts (via J domain) with HSPA8/Hsc70. Forms a multiprotein complex, at least composed of DNAJB12, DNAJB14, HSPA8/Hsc70 and SGTA; interaction with DNAJB14 and HSPA8/Hsc70 is direct. In terms of processing, methylated at His-185 by METTL9.

The protein resides in the endoplasmic reticulum membrane. It localises to the nucleus membrane. Its function is as follows. Acts as a co-chaperone with HSPA8/Hsc70; required to promote protein folding and trafficking, prevent aggregation of client proteins, and promote unfolded proteins to endoplasmic reticulum-associated degradation (ERAD) pathway. Acts by determining HSPA8/Hsc70's ATPase and polypeptide-binding activities. Can also act independently of HSPA8/Hsc70: together with DNAJB14, acts as a chaperone that promotes maturation of potassium channels KCND2 and KCNH2 by stabilizing nascent channel subunits and assembling them into tetramers. While stabilization of nascent channel proteins is dependent on HSPA8/Hsc70, the process of oligomerization of channel subunits is independent of HSPA8/Hsc70. When overexpressed, forms membranous structures together with DNAJB14 and HSPA8/Hsc70 within the nucleus; the role of these structures, named DJANGOs, is still unclear. Functionally, (Microbial infection) In case of infection by polyomavirus, involved in the virus endoplasmic reticulum membrane penetration and infection. The chain is DnaJ homolog subfamily B member 12 from Homo sapiens (Human).